The primary structure comprises 240 residues: MGQKVNPIGMRLQVNRTWDSRWYADDKDYGNLLLEDLKIRDFIKKEAKQAGVSRVVIERPHKKCRVTIYAARPGVIIGKKGADIETLRKKLANFTGSELHLNIVEVRKPELDAQLVAESIAQQLERRVSFRRAMKRAVQNAMRMGALGIRVNVSGRLGGAEIARTEWYREGRVPLHTLRADIDYALSEASTPYGIIGVKVWIFKGEIMEHDPQARDRRATEAQDGPSPRGPRRDRDRDAR.

The region spanning 39–107 (IRDFIKKEAK…ELHLNIVEVR (69 aa)) is the KH type-2 domain. Basic and acidic residues-rich tracts occupy residues 212–221 (PQARDRRATE) and 231–240 (PRRDRDRDAR). The disordered stretch occupies residues 212-240 (PQARDRRATEAQDGPSPRGPRRDRDRDAR).

The protein belongs to the universal ribosomal protein uS3 family. As to quaternary structure, part of the 30S ribosomal subunit. Forms a tight complex with proteins S10 and S14.

Functionally, binds the lower part of the 30S subunit head. Binds mRNA in the 70S ribosome, positioning it for translation. This chain is Small ribosomal subunit protein uS3, found in Paracoccus denitrificans (strain Pd 1222).